The sequence spans 292 residues: ATP phosphoribosyltransferase (292 aa).

This sequence belongs to the ATP phosphoribosyltransferase family. Long subfamily. The cofactor is Mg(2+).

It is found in the cytoplasm. The enzyme catalyses 1-(5-phospho-beta-D-ribosyl)-ATP + diphosphate = 5-phospho-alpha-D-ribose 1-diphosphate + ATP. Its pathway is amino-acid biosynthesis; L-histidine biosynthesis; L-histidine from 5-phospho-alpha-D-ribose 1-diphosphate: step 1/9. With respect to regulation, feedback inhibited by histidine. Its function is as follows. Catalyzes the condensation of ATP and 5-phosphoribose 1-diphosphate to form N'-(5'-phosphoribosyl)-ATP (PR-ATP). Has a crucial role in the pathway because the rate of histidine biosynthesis seems to be controlled primarily by regulation of HisG enzymatic activity. The polypeptide is ATP phosphoribosyltransferase (Desulfatibacillum aliphaticivorans).